Consider the following 170-residue polypeptide: Extracellular globin-3 (170 aa).

An N-terminal signal peptide occupies residues 1–17; the sequence is MLRQLLVLVGLAVVCLA. The Globin domain occupies 23 to 169; sequence CCSEEDHRIV…ILTKISSRLN (147 aa). A disulfide bridge links Cys24 with Cys156. His119 provides a ligand contact to heme b.

It belongs to the globin family. The extracellular hemoglobin of the earthworm consists of 12 subunits that have a hexagonal bilayer structure with a molecular weight near 3.8 million. Each one-twelfth subunit is composed primarily of disulfide linked trimers (chains A, B, and C) and monomers (chain D).

Its subcellular location is the secreted. The polypeptide is Extracellular globin-3 (Lumbricus terrestris (Common earthworm)).